The chain runs to 694 residues: Glycine--tRNA ligase beta subunit (694 aa).

It belongs to the class-II aminoacyl-tRNA synthetase family. As to quaternary structure, tetramer of two alpha and two beta subunits.

It localises to the cytoplasm. The enzyme catalyses tRNA(Gly) + glycine + ATP = glycyl-tRNA(Gly) + AMP + diphosphate. In Shewanella denitrificans (strain OS217 / ATCC BAA-1090 / DSM 15013), this protein is Glycine--tRNA ligase beta subunit.